The sequence spans 753 residues: LIM domain and actin-binding protein 1 (753 aa).

Methionine 1 carries the post-translational modification N-acetylmethionine. Serine 15 is modified (phosphoserine). Positions 46-56 are enriched in basic and acidic residues; it reads EEANMERKKNN. 2 disordered regions span residues 46–66 and 82–186; these read EEAN…HFRR and GAEF…TSGK. Serine 132 is modified (phosphoserine). Residues 143 to 152 are compositionally biased toward basic and acidic residues; the sequence is PRSENSHDFK. A Required for interaction with NPC1L1 motif is present at residues 164–166; sequence CLG. Basic and acidic residues predominate over residues 167 to 177; the sequence is DSRHEAEKPET. 4 positions are modified to phosphoserine: serine 225, serine 230, serine 242, and serine 263. 2 disordered regions span residues 276 to 326 and 341 to 379; these read AAVS…VSTT and TCNS…TAKK. Polar residues predominate over residues 278–291; that stretch reads VSKQSSPASYTNEL. Basic and acidic residues predominate over residues 292–305; it reads KTSESKTHKWEQKE. Residues 342-351 are compositionally biased toward polar residues; sequence CNSQVKSEAQ. Serine 348, serine 360, serine 367, and serine 372 each carry phosphoserine. Over residues 363 to 375 the composition is skewed to polar residues; it reads ARTSSLPESSPSK. The LIM zinc-binding domain maps to 386 to 446; sequence ESCVECQKTV…KPHFNQLFKS (61 aa). An N6-succinyllysine modification is found at lysine 437. Phosphoserine is present on residues serine 467, serine 485, and serine 488. Disordered regions lie at residues 467-493, 505-669, and 682-703; these read SDNE…GVED, SMEA…FELE, and EDDN…GWSG. Positions 491-511 are required for interaction with MYO5B; the sequence is VEDAPIAKVGVLAASMEAKAS. 2 stretches are compositionally biased toward basic and acidic residues: residues 512–525 and 554–565; these read SQRE…ETKK and WPPEDDVCKTEA. Positions 598-609 are enriched in low complexity; that stretch reads SSIKSPKASSPS. Phosphoserine is present on residues serine 599, serine 602, serine 607, and serine 615. Over residues 630-666 the composition is skewed to basic and acidic residues; the sequence is MERKQTENARPSGEKENVGKSRWQGEEVPRSKDRSSF. 3 positions are modified to phosphoserine: serine 692, serine 720, and serine 735.

As to quaternary structure, interacts with NPC1L1; bridges NPC1L1 with MYO5B. Interacts with MYO5B; bridges MYO5B with NPC1L1. Interacts with PXN; this complex stabilizes actin dynamics. Binds to G-actin and F-actin. Interacts with LUZP1 (via C-terminus); both proteins restrict ciliation and may work together to regulate this process. Binds RAB40B (GTP-bound); interaction influences LIMA1 subcellular localization in lamellipodia during cell migration. In terms of processing, phosphorylation of the C-terminal region by MAPK1/MAPK3 reduces its association with F-actin and contributes to actin filament reorganization and enhances cell motility. Ubiquitinated by the ECS(RAB40B) complex leading to its degradation. As to expression, highly expressed in the small intestine, including the duodenum, jejunum, and ileum. Low expression in the liver and very low expressed in the heart, spleen, lung, brain, and pancreas. Isoform Alpha is highly expressed in embryos from day 7-11 and in adult spleen and lung. Isoform Beta expression is highest in adult kidney, testis, lung and liver, intermediate in heart, brain, spleen, skeletal muscle and low in embryos.

It is found in the cytoplasm. The protein resides in the cell junction. It localises to the focal adhesion. The protein localises to the cytoskeleton. Its subcellular location is the stress fiber. It is found in the cell membrane. The protein resides in the cell projection. It localises to the ruffle. The protein localises to the lamellipodium. In terms of biological role, actin-binding protein involved in actin cytoskeleton regulation and dynamics. Increases the number and size of actin stress fibers and inhibits membrane ruffling. Inhibits actin filament depolymerization. Bundles actin filaments, delays filament nucleation and reduces formation of branched filaments. Acts as a negative regulator of primary cilium formation. Plays a role in cholesterol homeostasis. Influences plasma cholesterol levels through regulation of intestinal cholesterol absorption. May act as a scaffold protein by regulating NPC1L1 transportation, an essential protein for cholesterol absorption, to the plasma membrane by recruiting MYO5B to NPC1L1, and thus facilitates cholesterol uptake. The polypeptide is LIM domain and actin-binding protein 1 (Lima1) (Mus musculus (Mouse)).